The following is a 360-amino-acid chain: NAD(P)H-quinone oxidoreductase subunit 1, chloroplastic (360 aa).

8 consecutive transmembrane segments (helical) span residues 30 to 50 (FLPI…LVWL), 98 to 118 (FSIG…VIPF), 127 to 147 (FNIG…GLLM), 165 to 185 (AAQS…ISLL), 203 to 223 (FWGW…ISSL), 253 to 273 (FGLF…FVTV), 297 to 317 (IFGT…FLFI), and 340 to 360 (FLLP…VFSL).

It belongs to the complex I subunit 1 family. As to quaternary structure, NDH is composed of at least 16 different subunits, 5 of which are encoded in the nucleus.

It is found in the plastid. Its subcellular location is the chloroplast thylakoid membrane. It catalyses the reaction a plastoquinone + NADH + (n+1) H(+)(in) = a plastoquinol + NAD(+) + n H(+)(out). The catalysed reaction is a plastoquinone + NADPH + (n+1) H(+)(in) = a plastoquinol + NADP(+) + n H(+)(out). In terms of biological role, NDH shuttles electrons from NAD(P)H:plastoquinone, via FMN and iron-sulfur (Fe-S) centers, to quinones in the photosynthetic chain and possibly in a chloroplast respiratory chain. The immediate electron acceptor for the enzyme in this species is believed to be plastoquinone. Couples the redox reaction to proton translocation, and thus conserves the redox energy in a proton gradient. This chain is NAD(P)H-quinone oxidoreductase subunit 1, chloroplastic, found in Aethionema cordifolium (Lebanon stonecress).